The primary structure comprises 354 residues: MSIQTDDFAPVPPPKRVVSAAPTSPQEEALERALRPKLLQEYVGQAKAREQLEIFIGAARKREEALDHVLLFGPPGLGKTTLSHIIAAELGVNLRQTSGPVLEKPKDLAALLTNLEKNDVLFIDEIHRLSPVVEEILYPALEDYQIDIMIGEGPAARSIKLDLQPFTLVGATTRAGMLTNPLRDRFGIVARLEFYTPEELSRIVTRSAGLLNAPIDAQGAFEIARRSRGTPRIANRLLRRVRDYADVKGDGRITQDIAQRALAMLDVDPQGFDVMDRKLLEAVVHRFDGGPVGLDNIAASIGEEPGTIEDVIEPYLIQQGYLQRTPRGRIATLAAFRHLGVAPSRQHTDLFGPA.

The segment at 1–24 is disordered; the sequence is MSIQTDDFAPVPPPKRVVSAAPTS. The interval 5 to 195 is large ATPase domain (RuvB-L); that stretch reads TDDFAPVPPP…FGIVARLEFY (191 aa). Residues Leu34, Arg35, Gly76, Lys79, Thr80, Thr81, 142–144, Arg185, Tyr195, and Arg232 contribute to the ATP site; that span reads EDY. Residue Thr80 coordinates Mg(2+). The tract at residues 196–266 is small ATPAse domain (RuvB-S); it reads TPEELSRIVT…IAQRALAMLD (71 aa). The interval 269–354 is head domain (RuvB-H); that stretch reads PQGFDVMDRK…RQHTDLFGPA (86 aa). DNA contacts are provided by Arg324 and Arg329.

This sequence belongs to the RuvB family. In terms of assembly, homohexamer. Forms an RuvA(8)-RuvB(12)-Holliday junction (HJ) complex. HJ DNA is sandwiched between 2 RuvA tetramers; dsDNA enters through RuvA and exits via RuvB. An RuvB hexamer assembles on each DNA strand where it exits the tetramer. Each RuvB hexamer is contacted by two RuvA subunits (via domain III) on 2 adjacent RuvB subunits; this complex drives branch migration. In the full resolvosome a probable DNA-RuvA(4)-RuvB(12)-RuvC(2) complex forms which resolves the HJ.

The protein localises to the cytoplasm. It carries out the reaction ATP + H2O = ADP + phosphate + H(+). The RuvA-RuvB-RuvC complex processes Holliday junction (HJ) DNA during genetic recombination and DNA repair, while the RuvA-RuvB complex plays an important role in the rescue of blocked DNA replication forks via replication fork reversal (RFR). RuvA specifically binds to HJ cruciform DNA, conferring on it an open structure. The RuvB hexamer acts as an ATP-dependent pump, pulling dsDNA into and through the RuvAB complex. RuvB forms 2 homohexamers on either side of HJ DNA bound by 1 or 2 RuvA tetramers; 4 subunits per hexamer contact DNA at a time. Coordinated motions by a converter formed by DNA-disengaged RuvB subunits stimulates ATP hydrolysis and nucleotide exchange. Immobilization of the converter enables RuvB to convert the ATP-contained energy into a lever motion, pulling 2 nucleotides of DNA out of the RuvA tetramer per ATP hydrolyzed, thus driving DNA branch migration. The RuvB motors rotate together with the DNA substrate, which together with the progressing nucleotide cycle form the mechanistic basis for DNA recombination by continuous HJ branch migration. Branch migration allows RuvC to scan DNA until it finds its consensus sequence, where it cleaves and resolves cruciform DNA. The protein is Holliday junction branch migration complex subunit RuvB of Paracidovorax citrulli (strain AAC00-1) (Acidovorax citrulli).